The sequence spans 381 residues: tRNA pseudouridine synthase D (381 aa).

The Nucleophile role is filled by Asp81. The region spanning 160 to 335 is the TRUD domain; it reads GMPNYFGSQR…TLGSRRFFWV (176 aa).

Belongs to the pseudouridine synthase TruD family.

It catalyses the reaction uridine(13) in tRNA = pseudouridine(13) in tRNA. Its function is as follows. Responsible for synthesis of pseudouridine from uracil-13 in transfer RNAs. This Helicobacter pylori (strain P12) protein is tRNA pseudouridine synthase D.